A 295-amino-acid chain; its full sequence is Protease HtpX (295 aa).

Transmembrane regions (helical) follow at residues 4–24 and 42–62; these read ILLFLATNLAVVLIASITLSL and QLLVFCAVFGFAGSLFSLFIS. His-147 contributes to the Zn(2+) binding site. Residue Glu-148 is part of the active site. His-151 is a binding site for Zn(2+). Transmembrane regions (helical) follow at residues 158–178 and 195–215; these read VTLALVQGVVNTFVMFFARII and IAYFVATIFAEVVLGFLASAI. Glu-224 lines the Zn(2+) pocket.

Belongs to the peptidase M48B family. The cofactor is Zn(2+).

It localises to the cell inner membrane. The sequence is that of Protease HtpX from Pseudomonas fluorescens (strain SBW25).